The chain runs to 246 residues: Probable transcriptional regulatory protein CA_C2295 (246 aa).

Belongs to the TACO1 family.

The protein localises to the cytoplasm. In Clostridium acetobutylicum (strain ATCC 824 / DSM 792 / JCM 1419 / IAM 19013 / LMG 5710 / NBRC 13948 / NRRL B-527 / VKM B-1787 / 2291 / W), this protein is Probable transcriptional regulatory protein CA_C2295.